Here is a 436-residue protein sequence, read N- to C-terminus: MEMLRRNFFRLLMVLVAGCGLIASPAKALVEIDINKGNVEPLPIAITDFVQGELAQKISDVIAADLKRSGLFAPINKGAFIEKVSNPDATPRFEDWKVINAQALVIGRVTKEGDGRLKAEFRLWDTFAGTQMLGQQFYTQPENWRRVAHIIADAIYERITGEKGYFDTRIVYVAESGPKNARQRQLAIMDQDGANSRALTNSNDIVLTPRFSPNRQEITYMSFENQQPRVYLLQLETGQREVVGNFPGMTFAPRFSPDGQRVIMSLQQEGNANIYTMDLRSRTTTRLTNTAAIDTSPSYSPDGSRVVFESDRGGRQQLYVMGADGSGQTRISFGDGSYSTPVWSPRGDLIAFTKQSGGKFSIGVMKPDGSGERILTTGFHNEGPTWAPNGRVLMFFRQNAGAGGPQLYSIDLTGYNEQLVPTQGFASDPAWSPLME.

An N-terminal signal peptide occupies residues 1 to 28 (MEMLRRNFFRLLMVLVAGCGLIASPAKA).

The protein belongs to the TolB family. As to quaternary structure, the Tol-Pal system is composed of five core proteins: the inner membrane proteins TolA, TolQ and TolR, the periplasmic protein TolB and the outer membrane protein Pal. They form a network linking the inner and outer membranes and the peptidoglycan layer.

The protein localises to the periplasm. In terms of biological role, part of the Tol-Pal system, which plays a role in outer membrane invagination during cell division and is important for maintaining outer membrane integrity. The protein is Tol-Pal system protein TolB of Sinorhizobium medicae (strain WSM419) (Ensifer medicae).